The primary structure comprises 515 residues: E3 ubiquitin-protein ligase RNF217 (515 aa).

2 disordered regions span residues 1 to 125 (MGEE…VLAQ) and 147 to 189 (PEAP…ADPL). Residues 10–22 (GSGGARASGGGSA) show a composition bias toward gly residues. 2 stretches are compositionally biased toward low complexity: residues 39-49 (GPRAAASSSRP) and 147-157 (PEAPSAESPSP). Residues 158–178 (SESPPQAPLGPIPASPPPSFP) show a composition bias toward pro residues. The segment covering 179 to 189 (SSPLSLPADPL) has biased composition (low complexity). The tract at residues 232 to 451 (MVLMCRVCLE…LSIFGCKYRY (220 aa)) is TRIAD supradomain. Zn(2+)-binding residues include C236, C239, C256, C259, C356, C359, H364, C369, C396, and C399. Residues 236–282 (CRVCLEDKPIKPLPCCKKAVCEECLKIYLSSQVQLGQVEIKCPVTEC) form an RING-type 1 zinc finger. The segment at 301-369 (IKYKYFLELG…HSPWHEGVNC (69 aa)) adopts an IBR-type zinc-finger fold. The RING-type 2; atypical zinc finger occupies 396-425 (CPKCKIHIQRTEGCDHMTCSQCNTNFCYRC). C409 is an active-site residue. Residues C414, C417, C422, C425, H438, and C447 each coordinate Zn(2+). The helical transmembrane segment at 476 to 496 (LILVLGLALGAIAVVIGLFVF) threads the bilayer.

It belongs to the RBR family. RNF217 subfamily. In terms of assembly, interacts with HAX1.

It localises to the membrane. It is found in the cytoplasm. It carries out the reaction [E2 ubiquitin-conjugating enzyme]-S-ubiquitinyl-L-cysteine + [acceptor protein]-L-lysine = [E2 ubiquitin-conjugating enzyme]-L-cysteine + [acceptor protein]-N(6)-ubiquitinyl-L-lysine.. The protein operates within protein modification; protein ubiquitination. Its function is as follows. E3 ubiquitin-protein ligase which accepts ubiquitin from E2 ubiquitin-conjugating enzymes in the form of a thioester and then directly transfers the ubiquitin to targeted substrates. Mediates the degradation of the iron exporter ferroportin/SLC40A1 and thus regulates iron homeostasis. In Mus musculus (Mouse), this protein is E3 ubiquitin-protein ligase RNF217 (Rnf217).